A 228-amino-acid polypeptide reads, in one-letter code: MAAAVEPEVEDPLWSFVRVLEKRDGTVLRLQQYGSGGVGCVVWDAAIVLSKYLETPGFSGDGAHALSRRSVLELGSGTGAVGLMAATLGADVIVTDLEELQDLLKMNIDMNKHLVTGSVQAKVLKWGEDIEDLMSPDYILMADCIYYEESLEPLLKTLKDLSGSETCIICCYEQRTMGKNPEIEKKYFELLQLDFDFEEIPLDKHDEEYRSEDIHIVYIRKKKPKPPS.

A2 bears the N-acetylalanine mark. Residues W43, 75 to 77 (GSG), D96, W126, A142, and Y147 contribute to the S-adenosyl-L-methionine site.

The protein belongs to the methyltransferase superfamily. METTL21 family. As to quaternary structure, interacts with ALKBH6. Interacts with ASPSCR1 and UBXN6; interaction with ASPSCR1, but not with UBXN6, enhances VCP methylation. In terms of tissue distribution, widely expressed.

It is found in the cytoplasm. The catalysed reaction is L-lysyl-[protein] + 3 S-adenosyl-L-methionine = N(6),N(6),N(6)-trimethyl-L-lysyl-[protein] + 3 S-adenosyl-L-homocysteine + 3 H(+). Functionally, protein N-lysine methyltransferase that specifically trimethylates 'Lys-315' of VCP/p97; this modification may decrease VCP ATPase activity. This is Protein N-lysine methyltransferase METTL21D (Vcpkmt) from Mus musculus (Mouse).